A 376-amino-acid chain; its full sequence is Small RNA 2'-O-methyltransferase (376 aa).

Positions 49, 67, and 103 each coordinate S-adenosyl-L-methionine. The Mg(2+) site is built by glutamate 121, glutamate 124, histidine 125, and histidine 171.

Belongs to the methyltransferase superfamily. HEN1 family. Mg(2+) is required as a cofactor.

The protein localises to the cytoplasm. The catalysed reaction is small RNA 3'-end nucleotide + S-adenosyl-L-methionine = small RNA 3'-end 2'-O-methylnucleotide + S-adenosyl-L-homocysteine + H(+). Its function is as follows. Methyltransferase that adds a 2'-O-methyl group at the 3'-end of piRNAs, a class of 24 to 30 nucleotide RNAs that are generated by a Dicer-independent mechanism and are primarily derived from transposons and other repeated sequence elements. This probably protects the 3'-end of piRNAs from uridylation activity and subsequent degradation. Stabilization of piRNAs is essential for gametogenesis. This Gallus gallus (Chicken) protein is Small RNA 2'-O-methyltransferase (HENMT1).